The following is a 279-amino-acid chain: Cell death abnormality protein 2 (279 aa).

Residues 14–115 (FYFPGMSREE…EASLLAAYKK (102 aa)) form the SH2 domain. The region spanning 116-176 (PIIEVVVGTF…PANYVQIQME (61 aa)) is the SH3 1 domain. The disordered stretch occupies residues 181 to 213 (RTSKGASQSSIGSSGGGAERFSSASTSSDNIEL). Over residues 202 to 211 (SSASTSSDNI) the composition is skewed to polar residues. The region spanning 214 to 277 (QPRLPAKAKV…PHTYLRFTAV (64 aa)) is the SH3 2 domain.

It belongs to the CRK family. As to quaternary structure, interacts with ced-5 (via C-terminus which contains a candidate SH3-binding, proline-rich region). Forms a ternary complex with ced-5 and ced-12. Interacts (via SH2 domain) with src-1 (when activated and phosphorylated at 'Tyr-416').

In terms of biological role, required for cell migration and engulfment of cell corpses but not for programmed cell death/apoptosis. Has a role in the migration of the 2 gonadal distal tip cells (DTCs). Plays a role in protecting dopaminergic neurons from oxidative stress-induced degeneration. This is Cell death abnormality protein 2 from Caenorhabditis elegans.